Here is a 450-residue protein sequence, read N- to C-terminus: Biotin carboxylase 1 (450 aa).

In terms of domain architecture, Biotin carboxylation spans 1-447 (MIKKLLIANR…NTKFLETYDV (447 aa)). ATP is bound by residues Lys116, Lys158, 164 to 165 (GG), 200 to 203 (EKYI), and His208. The region spanning 120–318 (RETMKQAGVP…LIKEQIKVAS (199 aa)) is the ATP-grasp domain. Lys237 is a binding site for hydrogencarbonate. Residues Glu275 and Glu289 each contribute to the ATP site. The Mg(2+) site is built by Glu275, Glu289, and Asn291. Mn(2+)-binding residues include Glu275, Glu289, and Asn291. Positions 293, 296, and 339 each coordinate hydrogencarbonate. The active site involves Arg293. Arg339 provides a ligand contact to biotin.

In terms of assembly, acetyl-CoA carboxylase is a heterohexamer of biotin carboxyl carrier protein, biotin carboxylase and the two subunits of carboxyl transferase in a 2:2 complex. Requires Mg(2+) as cofactor. It depends on Mn(2+) as a cofactor.

It carries out the reaction N(6)-biotinyl-L-lysyl-[protein] + hydrogencarbonate + ATP = N(6)-carboxybiotinyl-L-lysyl-[protein] + ADP + phosphate + H(+). Its pathway is lipid metabolism; malonyl-CoA biosynthesis; malonyl-CoA from acetyl-CoA: step 1/1. Functionally, this protein is a component of the acetyl coenzyme A carboxylase complex; first, biotin carboxylase catalyzes the carboxylation of the carrier protein and then the transcarboxylase transfers the carboxyl group to form malonyl-CoA. This Bacillus subtilis (strain 168) protein is Biotin carboxylase 1 (accC1).